We begin with the raw amino-acid sequence, 604 residues long: MENSVTQDGIATVLANQSLDSSSVRPEIVVQVVDLKPAGNRYTFSANDGKMKIKAMLPATLTSDIISGKIQNLGLIRLLEYTVNDIPGKSEEKYMLITKCEAVASALDSEIKAEIKASTGIMLKPKHEFVAKSASQIINEQRGNAAPAARMAMTRRVHPLVSLNPYQGSWTIKVRVTNKGVMRTYKNARGEGCVFNVELTDEEGTQIQATMFNAAARKFYDRFEMGKVYYISRGSLKLANKQFKTVQNDYEMTLNENSEVEEASNEEMFTPETKFNFVPIDELGTYVNQKDLIDVIGVVQSVSPTMSIRRKNDNEMIPKRDITLADETKKTVVVSLWNDLATGIGQELLDMADNHPVIAIKSLKVGAFQGVSLSTISRSNVVINPNSPEATKLKSWYDAEGKETSMSAIGSGMSSSANNGSRSMYSDRVFLSHITSNPSLGEEKPVFFSTRAYISFIKPDQTMWYRACKTCNKKVTEAMDSGYWCESCQKKDQECSLRYIMAVKVSDSTGETWLSAFNDEAEKIIGCTADDLNDLKSEEGEVNEFQTKLKEATWSSHLFRISVSQQEYNSEKRQRITVRGVSPIDFAAETRLLLQDISKNKTSQ.

The segment at residues 170 to 256 (WTIKVRVTNK…QNDYEMTLNE (87 aa)) is a DNA-binding region (OB). A C4-type zinc finger spans residues 468–488 (CKTCNKKVTEAMDSGYWCESC).

The protein belongs to the replication factor A protein 1 family. In terms of assembly, heterotrimer of RPA1, RPA2 and RPA3 (canonical replication protein A complex).

It is found in the nucleus. Component of the replication protein A complex (RPA) required for DNA recombination, repair and replication. The activity of RPA is mediated by single-stranded DNA binding and protein interactions. Probably involved in repair of double-strand DNA breaks (DSBs) induced by genotoxic stresses. The polypeptide is Replication protein A 70 kDa DNA-binding subunit B (RPA1B) (Arabidopsis thaliana (Mouse-ear cress)).